Consider the following 400-residue polypeptide: S-adenosylmethionine synthase (400 aa).

136–141 (GQGSVD) contacts ATP.

The protein belongs to the AdoMet synthase 2 family. Mg(2+) serves as cofactor.

The catalysed reaction is L-methionine + ATP + H2O = S-adenosyl-L-methionine + phosphate + diphosphate. The protein operates within amino-acid biosynthesis; S-adenosyl-L-methionine biosynthesis; S-adenosyl-L-methionine from L-methionine: step 1/1. Catalyzes the formation of S-adenosylmethionine from methionine and ATP. The protein is S-adenosylmethionine synthase of Thermoplasma volcanium (strain ATCC 51530 / DSM 4299 / JCM 9571 / NBRC 15438 / GSS1).